The primary structure comprises 967 residues: Nonsense-mediated mRNA decay factor SMG8 (967 aa).

The interval 627-702 (LNEGEDADAD…SCPESQSVAS (76 aa)) is disordered. Positions 628-639 (NEGEDADADADS) are enriched in acidic residues. Over residues 643–666 (RSQICSSGQSSRSRSNSSSSDTSS) the composition is skewed to low complexity. A compositionally biased stretch (polar residues) spans 686 to 702 (ATEALSESCPESQSVAS).

The protein belongs to the SMG8 family.

Functionally, involved in nonsense-mediated decay (NMD) of mRNAs containing premature stop codons. Probable component of kinase complex containing nonC and recruited to stalled ribosomes. The protein is Nonsense-mediated mRNA decay factor SMG8 of Drosophila mojavensis (Fruit fly).